Here is a 200-residue protein sequence, read N- to C-terminus: Dephospho-CoA kinase (200 aa).

Residues 4-200 (TIGLTGSVAT…TFIKRFVKNK (197 aa)) enclose the DPCK domain. ATP is bound at residue 12–17 (ATGKST).

This sequence belongs to the CoaE family.

It localises to the cytoplasm. It catalyses the reaction 3'-dephospho-CoA + ATP = ADP + CoA + H(+). It participates in cofactor biosynthesis; coenzyme A biosynthesis; CoA from (R)-pantothenate: step 5/5. Functionally, catalyzes the phosphorylation of the 3'-hydroxyl group of dephosphocoenzyme A to form coenzyme A. This Listeria monocytogenes serotype 4b (strain F2365) protein is Dephospho-CoA kinase.